The chain runs to 451 residues: Chromosomal replication initiator protein DnaA (451 aa).

Residues 1–77 (MTENEQIFWN…EVYNAQISVD (77 aa)) form a domain I, interacts with DnaA modulators region. The interval 77–110 (DYVFEEDLMIEQNQTKINQKPKQQALNSLPTVTS) is domain II. Positions 111–329 (DLNSKYSFEN…GALKDISLVA (219 aa)) are domain III, AAA+ region. Positions 155, 157, 158, and 159 each coordinate ATP. The tract at residues 330-451 (NFKQIDTITV…EIETIKNKIK (122 aa)) is domain IV, binds dsDNA.

It belongs to the DnaA family. In terms of assembly, oligomerizes as a right-handed, spiral filament on DNA at oriC.

It is found in the cytoplasm. Functionally, plays an essential role in the initiation and regulation of chromosomal replication. ATP-DnaA binds to the origin of replication (oriC) to initiate formation of the DNA replication initiation complex once per cell cycle. Binds the DnaA box (a 9 base pair repeat at the origin) and separates the double-stranded (ds)DNA. Forms a right-handed helical filament on oriC DNA; dsDNA binds to the exterior of the filament while single-stranded (ss)DNA is stabiized in the filament's interior. The ATP-DnaA-oriC complex binds and stabilizes one strand of the AT-rich DNA unwinding element (DUE), permitting loading of DNA polymerase. After initiation quickly degrades to an ADP-DnaA complex that is not apt for DNA replication. Binds acidic phospholipids. Its function is as follows. The half-life of ATP-DnaA is 12 minutes at 37 degrees Celsius, in E.coli the half-life is about 41 minutes. The protein is Chromosomal replication initiator protein DnaA of Streptococcus pyogenes serotype M1.